The following is a 133-amino-acid chain: MEGYNILAVLIILVGVSMGQIPGGWIDANVGDTDVKEAARFATEAQSSRSNSLYHHKLLKIHKARTQVVSGINYEVFIETGTTTCKKSEVPLEDLKRCAVPENGVKHLCQAIVWVQAWIPRTKVTKLECQNKG.

A signal peptide spans 1–19 (MEGYNILAVLIILVGVSMG). Glutamine 20 is subject to Pyrrolidone carboxylic acid. The Secondary area of contact motif lies at 67-71 (QVVSG). Cystine bridges form between cysteine 85/cysteine 98 and cysteine 109/cysteine 129.

This sequence belongs to the cystatin family. As to expression, expressed in hemocytes and slightly in heart.

It is found in the cytoplasmic granule. Its function is as follows. Tight-binding inhibitor for papain. It has an important role in the protection of cells, antimicrobial activity against Gram-negative bacteria, defense against invading microbes, and response to external stimuli. The protein is L-cystatin of Tachypleus tridentatus (Japanese horseshoe crab).